The primary structure comprises 832 residues: Prickle-like protein 1 (832 aa).

One can recognise a PET domain in the interval 14–122 (FGCQRSSTSD…TIKLLSRAVM (109 aa)). 3 LIM zinc-binding domains span residues 124-188 (AVCE…ELLK), 189-249 (PRCS…LYAE), and 250-313 (YCET…EDIH). Residues 314–342 (ASDSSDSAFQSARSRDSRRSVRMGRSSRS) are disordered. Phosphoserine is present on residues Ser-315, Ser-592, and Ser-595. Disordered regions lie at residues 663 to 688 (HFEE…DNAL) and 765 to 832 (SSST…CIIS). The segment covering 670-681 (RPHHHRHRRSRK) has biased composition (basic residues). Ser-684 is subject to Phosphoserine. Polar residues predominate over residues 798–815 (DLSSPASALPTPQFTQRT). Residues 816-832 (TKSKKKKGHKGKNCIIS) are compositionally biased toward basic residues. Cys-829 carries the cysteine methyl ester modification. A lipid anchor (S-farnesyl cysteine) is attached at Cys-829. The propeptide at 830–832 (IIS) is removed in mature form.

This sequence belongs to the prickle / espinas / testin family. As to quaternary structure, interacts with REST.

Its subcellular location is the nucleus membrane. The protein resides in the cytoplasm. The protein localises to the cytosol. Involved in the planar cell polarity pathway that controls convergent extension during gastrulation and neural tube closure. Convergent extension is a complex morphogenetic process during which cells elongate, move mediolaterally, and intercalate between neighboring cells, leading to convergence toward the mediolateral axis and extension along the anteroposterior axis. Necessary for nuclear localization of REST. May serve as nuclear receptor. The polypeptide is Prickle-like protein 1 (Prickle1) (Mus musculus (Mouse)).